The primary structure comprises 604 residues: Putative O-acetyltransferase SAR0937 (604 aa).

11 helical membrane-spanning segments follow: residues 15–35, 43–63, 85–105, 150–170, 176–196, 212–232, 240–260, 267–287, 310–330, 332–352, and 377–397; these read YMPGLDGLRAIAVLGIIIYHL, GFLGVDTFFVISGYLITSLLL, LLPAVIVLLMVVGTATLLLKS, AIEEQFYIFFPVILVTLLLTI, IGFIFWGVSIISLGLMMFIYS, LQTLLLGVILAFLWPPFKLKN, YVIDSIGSLSFIVLILLFFII, IYDGGFYLISILTLFIIASVV, YSLYLWHFAVISFVHSYYVDG, IPVYVYFIDISLTIIFAELSY, and FIRMVIVVTLLIPFMLILVGA. Catalysis depends on residues S459, D581, and H584.

This sequence belongs to the acyltransferase 3 family.

It is found in the cell membrane. This is Putative O-acetyltransferase SAR0937 from Staphylococcus aureus (strain MRSA252).